The sequence spans 311 residues: Non-homologous end joining protein Ku (311 aa).

Residues 26–210 enclose the Ku domain; that stretch reads ISFGLVNIPI…NVNDKELQTA (185 aa). The segment at 269–311 is disordered; it reads ASIDRTRRPNRETPAAAPAQAAEPKGAGDKKQKTTRKKASGTS. Residues 282–293 are compositionally biased toward low complexity; that stretch reads PAAAPAQAAEPK. Basic residues predominate over residues 301–311; the sequence is KTTRKKASGTS.

It belongs to the prokaryotic Ku family. Homodimer. Interacts with LigD.

It is found in the spore core. Functionally, with LigD forms a non-homologous end joining (NHEJ) DNA repair enzyme, which repairs dsDNA breaks with reduced fidelity. Binds linear dsDNA with 5'- and 3'- overhangs but not closed circular dsDNA nor ssDNA. Recruits and stimulates the ligase activity of LigD. Probably involved in DNA repair during spore germination. The sequence is that of Non-homologous end joining protein Ku from Bacillus subtilis (strain 168).